Reading from the N-terminus, the 244-residue chain is Protein pendolino (244 aa).

The UBC core domain maps to 20–176 (QQEYKILAEY…VQENIKESKE (157 aa)).

It belongs to the ubiquitin-conjugating enzyme family. FTS subfamily. As to quaternary structure, interacts (via N-terminus) with cav/HOAP (via N-terminus); the interaction is direct. Probably interacts (via N-terminus and UBC domain) with ver and moi.

Its subcellular location is the nucleus. The protein resides in the nucleolus. It is found in the chromosome. Required for efficient DNA replication, probably through involvement in telomere replication. May have a role in telomere capping of heterochromatic chromosome ends. The protein is Protein pendolino of Drosophila melanogaster (Fruit fly).